We begin with the raw amino-acid sequence, 180 residues long: Orotate phosphoribosyltransferase (180 aa).

5-phospho-alpha-D-ribose 1-diphosphate is bound by residues R95, K96, K99, and 121-129; that span reads EDVTTTGGS. 2 residues coordinate orotate: T125 and R153.

Belongs to the purine/pyrimidine phosphoribosyltransferase family. PyrE subfamily. Homodimer. Requires Mg(2+) as cofactor.

The catalysed reaction is orotidine 5'-phosphate + diphosphate = orotate + 5-phospho-alpha-D-ribose 1-diphosphate. It functions in the pathway pyrimidine metabolism; UMP biosynthesis via de novo pathway; UMP from orotate: step 1/2. Catalyzes the transfer of a ribosyl phosphate group from 5-phosphoribose 1-diphosphate to orotate, leading to the formation of orotidine monophosphate (OMP). In Methanothermobacter thermautotrophicus (strain ATCC 29096 / DSM 1053 / JCM 10044 / NBRC 100330 / Delta H) (Methanobacterium thermoautotrophicum), this protein is Orotate phosphoribosyltransferase.